A 171-amino-acid polypeptide reads, in one-letter code: Sorcin (171 aa).

EF-hand domains follow at residues 3–38 (MDTNSLRHIFSRVDADKSGSISANELQTSLSNGLGT), 40–69 (LNIRTVQLMVAMFDRDMNGTINFNEFLGLF), 70–105 (KYVQDWQTCFRRYDRDNSGSIDLNEFSNALISFGYH), and 106–140 (LSPQFVNLMMRRFDRNRGSIAFDDFIYACVCLQTL). Residues Asp16, Asp18, Ser20, Ser22, Glu27, Asp53, Asp55, Asn57, Thr59, Glu64, Asp83, Asp85, Ser87, Ser89, and Glu94 each contribute to the Ca(2+) site.

Its subcellular location is the cytoplasm. Its function is as follows. Calcium-binding protein. The sequence is that of Sorcin from Schistosoma japonicum (Blood fluke).